The following is a 287-amino-acid chain: Large ribosomal subunit protein uL2 (287 aa).

Disordered stretches follow at residues 25–57 and 203–287; these read TKTE…RGGG and LSAG…GRES. 2 stretches are compositionally biased toward basic residues: residues 209 to 220 and 259 to 287; these read GRNRWKGRRPKV and TRNR…GRES.

Belongs to the universal ribosomal protein uL2 family. In terms of assembly, part of the 50S ribosomal subunit. Forms a bridge to the 30S subunit in the 70S ribosome.

Functionally, one of the primary rRNA binding proteins. Required for association of the 30S and 50S subunits to form the 70S ribosome, for tRNA binding and peptide bond formation. It has been suggested to have peptidyltransferase activity; this is somewhat controversial. Makes several contacts with the 16S rRNA in the 70S ribosome. The polypeptide is Large ribosomal subunit protein uL2 (Nostoc punctiforme (strain ATCC 29133 / PCC 73102)).